Consider the following 86-residue polypeptide: U15-lycotoxin-Ls1d (86 aa).

A signal peptide spans 1-20 (MNSKIFAVLLLLGLLSCVLS). The 46-residue stretch at 21 to 66 (DQYCPKSSITACKKMNIRNDCCKDDDCTGGSWCCATPCGNFCKYPT) folds into the WAP domain. Cystine bridges form between C24–C54, C32–C58, C41–C53, C42–C80, and C47–C62.

The protein belongs to the venom protein 11 family. 01 (wap-1) subfamily. In terms of processing, contains 5 disulfide bonds. Expressed by the venom gland.

The protein resides in the secreted. Its function is as follows. Has antibacterial activity. The polypeptide is U15-lycotoxin-Ls1d (Lycosa singoriensis (Wolf spider)).